Reading from the N-terminus, the 498-residue chain is Probable malate:quinone oxidoreductase (498 aa).

This sequence belongs to the MQO family. Requires FAD as cofactor.

The catalysed reaction is (S)-malate + a quinone = a quinol + oxaloacetate. It functions in the pathway carbohydrate metabolism; tricarboxylic acid cycle; oxaloacetate from (S)-malate (quinone route): step 1/1. In Prochlorococcus marinus (strain AS9601), this protein is Probable malate:quinone oxidoreductase.